The primary structure comprises 185 residues: MIVDTFTNRGSTFFSKLSTVLFFLCAVITFQGVIQRREVELDTPVYVHYAKYRSARFYHAFRNVRQQYAQVKFNMDADLSELWDWNTKHVVVYLVASYSTEKHEKNQVVVWDKILSSPEESKMFMKDTLSNIQAHPFNEYSNQFEGKNATYTLHWTVSPKMGFLSWGAGPGSYEIPFHKIITQPK.

The Cytoplasmic portion of the chain corresponds to 1–12 (MIVDTFTNRGST). Residues 13–34 (FFSKLSTVLFFLCAVITFQGVI) form a helical; Signal-anchor for type II membrane protein membrane-spanning segment. Residues 35–185 (QRREVELDTP…PFHKIITQPK (151 aa)) are Lumenal-facing. N-linked (GlcNAc...) asparagine glycosylation occurs at Asn148.

The protein belongs to the SPCS3 family. As to quaternary structure, component of the signal peptidase complex (SPC) composed of a catalytic subunit sec11 and three accessory subunits spc1, spc2 and spc3. The complex induces a local thinning of the ER membrane which is used to measure the length of the signal peptide (SP) h-region of protein substrates. This ensures the selectivity of the complex towards h-regions shorter than 18-20 amino acids. SPC associates with the translocon complex.

The protein resides in the endoplasmic reticulum membrane. Functionally, essential component of the signal peptidase complex (SPC) which catalyzes the cleavage of N-terminal signal sequences from nascent proteins as they are translocated into the lumen of the endoplasmic reticulum. Essential for the SPC catalytic activity, possibly by stabilizing and positioning the active center of the complex close to the lumenal surface. Essential for viability. The protein is Signal peptidase complex subunit 3 (spc3) of Schizosaccharomyces pombe (strain 972 / ATCC 24843) (Fission yeast).